Consider the following 391-residue polypeptide: Chorismate synthase (391 aa).

Residue arginine 48 participates in NADP(+) binding. Residues 126–128 (RAS), glycine 286, 301–305 (KPTSS), and arginine 328 contribute to the FMN site.

Belongs to the chorismate synthase family. Requires FMNH2 as cofactor.

It catalyses the reaction 5-O-(1-carboxyvinyl)-3-phosphoshikimate = chorismate + phosphate. It functions in the pathway metabolic intermediate biosynthesis; chorismate biosynthesis; chorismate from D-erythrose 4-phosphate and phosphoenolpyruvate: step 7/7. Its function is as follows. Catalyzes the anti-1,4-elimination of the C-3 phosphate and the C-6 proR hydrogen from 5-enolpyruvylshikimate-3-phosphate (EPSP) to yield chorismate, which is the branch point compound that serves as the starting substrate for the three terminal pathways of aromatic amino acid biosynthesis. This reaction introduces a second double bond into the aromatic ring system. The protein is Chorismate synthase of Saccharolobus solfataricus (strain ATCC 35092 / DSM 1617 / JCM 11322 / P2) (Sulfolobus solfataricus).